The primary structure comprises 326 residues: Polycomb complex protein BMI-1 (326 aa).

Residues 18 to 57 (CVLCGGYFIDATTIIECLHSFCKTCIVRYLETSKYCPICD) form an RING-type zinc finger. A Nuclear localization signal motif is present at residues 81–95 (KLVPGLFKNEMKRRR). The interval 162–182 (RYLRCPAAMTVMHLRKFLRSK) is interaction with PHC2. Residues 164–228 (LRCPAAMTVM…GPLPLKYRVR (65 aa)) are interaction with E4F1. The disordered stretch occupies residues 236–326 (IGHQREGLSN…INGSSATSSG (91 aa)). Over residues 265–278 (LPSTSSCLPSPSTP) the composition is skewed to low complexity. Residues 279 to 310 (VQSPHPQFPHISSTMNGTSSSPGSNHQSSFTN) show a composition bias toward polar residues. Positions 315–326 (SSINGSSATSSG) are enriched in low complexity.

Component of a PRC1-like complex.

The protein localises to the nucleus. Its subcellular location is the cytoplasm. In terms of biological role, component of a Polycomb group (PcG) multiprotein PRC1-like complex, a complex class required to maintain the transcriptionally repressive state of many genes, including Hox genes, throughout development. PcG PRC1 complex acts via chromatin remodeling and modification of histones; it mediates monoubiquitination of histone H2A 'Lys-119', rendering chromatin heritably changed in its expressibility. In the PRC1-like complex, regulates the E3 ubiquitin-protein ligase activity of RNF2/RING2. This is Polycomb complex protein BMI-1 (BMI1) from Gallus gallus (Chicken).